A 463-amino-acid polypeptide reads, in one-letter code: Glutamate--tRNA ligase 1 (463 aa).

The short motif at 10–20 (PSPTGYLHIGG) is the 'HIGH' region element. The short motif at 238–242 (KLSKR) is the 'KMSKS' region element. Residue Lys241 coordinates ATP.

This sequence belongs to the class-I aminoacyl-tRNA synthetase family. Glutamate--tRNA ligase type 1 subfamily. Monomer.

The protein localises to the cytoplasm. It carries out the reaction tRNA(Glu) + L-glutamate + ATP = L-glutamyl-tRNA(Glu) + AMP + diphosphate. Catalyzes the attachment of glutamate to tRNA(Glu) in a two-step reaction: glutamate is first activated by ATP to form Glu-AMP and then transferred to the acceptor end of tRNA(Glu). The chain is Glutamate--tRNA ligase 1 from Helicobacter pylori (strain J99 / ATCC 700824) (Campylobacter pylori J99).